The sequence spans 301 residues: MSYPTKEGSDTAGNAHKNSENEPPNDCSTDIESPSADPNMIYQVETNPINREPGTATSQEDVVPQAAENSELETEIQKDQREEDLKEELLLLQTPIPRKLVSHKPLNDRSRSHSGKVEMKANNFPINHKTRFRLSTSWRVPFINSHEIRSMILHLLCDRYFSQAAGCQNTMWVKRKYIACLYHPNSFTHHERAITFRRPSRVHYYRPLTERMTSGKFCKSTDTKGKCRFRAIVRSVLFVSQIQIESIFNIKGFVDILTYIHTMNVMITNTNNGWKYFCPICGRLFNTYSELRQHSCSSSGN.

Positions 1–77 (MSYPTKEGSD…ENSELETEIQ (77 aa)) are disordered. The segment covering 44-60 (VETNPINREPGTATSQE) has biased composition (polar residues).

In terms of tissue distribution, expressed in a variety of fetal tissues.

The chain is CPX chromosomal region candidate gene 1 protein (CPXCR1) from Homo sapiens (Human).